Reading from the N-terminus, the 370-residue chain is Forkhead box protein J1.2 (370 aa).

Residues 45-74 (ANSRPPVPRVSQGPCSPPAGDTASCQAPRT) are disordered. The segment at residues 108-202 (KPPYSYATLI…VNGVLKRRRM (95 aa)) is a DNA-binding region (fork-head). The disordered stretch occupies residues 227-246 (PGSHHMQHISGGHRQSRRYE).

This sequence belongs to the FOXJ1 family.

The protein resides in the nucleus. Its function is as follows. Key transcription factor required for motile ciliogenesis. Activates genes essential for motile cilia formation and function. The polypeptide is Forkhead box protein J1.2 (Xenopus laevis (African clawed frog)).